We begin with the raw amino-acid sequence, 428 residues long: Enolase (428 aa).

Gln-162 serves as a coordination point for (2R)-2-phosphoglycerate. Glu-204 (proton donor) is an active-site residue. 3 residues coordinate Mg(2+): Asp-241, Glu-283, and Asp-310. (2R)-2-phosphoglycerate-binding residues include Lys-335, Arg-364, Ser-365, and Lys-386. Lys-335 functions as the Proton acceptor in the catalytic mechanism.

The protein belongs to the enolase family. Mg(2+) is required as a cofactor.

The protein localises to the cytoplasm. Its subcellular location is the secreted. It is found in the cell surface. It catalyses the reaction (2R)-2-phosphoglycerate = phosphoenolpyruvate + H2O. Its pathway is carbohydrate degradation; glycolysis; pyruvate from D-glyceraldehyde 3-phosphate: step 4/5. Catalyzes the reversible conversion of 2-phosphoglycerate (2-PG) into phosphoenolpyruvate (PEP). It is essential for the degradation of carbohydrates via glycolysis. The sequence is that of Enolase from Nocardia farcinica (strain IFM 10152).